Reading from the N-terminus, the 560-residue chain is MADFQDELLALAGIDDSDVASNRKRAHDDLDDVLSSSSDEDNNENVGQDYAEESGGEGNEKSEDEFEEKFKNPYRLEGKFKDEADRAKIMAMTEIERESILFEREEEISKLMERRELAIRLHQQNAQYMAQSTRRSTRDKPLTSAAAGKRDKLTELKKRRQERSARSVSERTRKRSPVSDYEEQNESEKSEEEEGYSPSYAEEKVEQVSKDNASANLYDLNAIRLGRKHVAEYMYHPIFESTVTGCFVRVKIGERDGQGVYRLCQVKGILESRKPYRVDGVLTKVSLECFHGRSKRVFDVNVLSNEPFSDHDFQRWHHQMMEDKLSMPSKNFVQRKLNDLRDMSKYVLSEKEVSDIINRKKELSRVPSNIAAEKTRLRQRRQAAYVAGNAELVKEIDDQLNTLEELSMGSNQNSNSAMDQLAKVNERNRRRNHTEIRLAEQRMNEERRRLSAAATATPMSAPTSVLTGTSPQPSPSLSTSIMSTPKLNPSESVVVASEKASSPDLSPKLLPSESQIFDEGIAVTQTPNTLEDKDFKLHEKAVHGIDDIIATVDFGIDINI.

Disordered stretches follow at residues 15 to 74 and 128 to 207; these read DDSD…KNPY and YMAQ…KVEQ. Residues 148-171 are compositionally biased toward basic and acidic residues; it reads GKRDKLTELKKRRQERSARSVSER. Residues 180–195 show a composition bias toward acidic residues; the sequence is DYEEQNESEKSEEEEG. S197 is subject to Phosphoserine. In terms of domain architecture, Plus3 spans 214-345; the sequence is SANLYDLNAI…KLNDLRDMSK (132 aa). The stretch at 387-456 forms a coiled coil; sequence AGNAELVKEI…RRRLSAAATA (70 aa). Residues 440 to 449 show a composition bias toward basic and acidic residues; the sequence is EQRMNEERRR. Residues 440 to 486 form a disordered region; sequence EQRMNEERRRLSAAATATPMSAPTSVLTGTSPQPSPSLSTSIMSTPK. The segment covering 451-480 has biased composition (low complexity); it reads SAAATATPMSAPTSVLTGTSPQPSPSLSTS. Phosphoserine occurs at positions 502 and 506.

Component of the PAF1 complex.

The protein localises to the nucleus. Its subcellular location is the nucleoplasm. Its function is as follows. The PAF1 complex is a multifunctional complex. Involved in transcription initiation via genetic interactions with TATA-binding proteins. Involved in elongation. Also has a role in transcription-coupled histone modification. Important for TATA site selection by TBP. Directly or indirectly regulates the DNA-binding properties of the TATA box-binding protein, and the relative activities of different TATA elements. The sequence is that of RNA polymerase-associated protein C651.09c from Schizosaccharomyces pombe (strain 972 / ATCC 24843) (Fission yeast).